A 283-amino-acid chain; its full sequence is Digeranylgeranylglyceryl phosphate synthase (283 aa).

8 helical membrane-spanning segments follow: residues Ile-21–Ile-41, Leu-45–Phe-65, Leu-97–Ile-117, Ile-135–Gly-155, Val-158–Val-178, Leu-204–Leu-224, Ile-226–Met-246, and Val-261–Ile-281.

It belongs to the UbiA prenyltransferase family. DGGGP synthase subfamily. It depends on Mg(2+) as a cofactor.

Its subcellular location is the cell membrane. It catalyses the reaction sn-3-O-(geranylgeranyl)glycerol 1-phosphate + (2E,6E,10E)-geranylgeranyl diphosphate = 2,3-bis-O-(geranylgeranyl)-sn-glycerol 1-phosphate + diphosphate. It functions in the pathway membrane lipid metabolism; glycerophospholipid metabolism. In terms of biological role, prenyltransferase that catalyzes the transfer of the geranylgeranyl moiety of geranylgeranyl diphosphate (GGPP) to the C2 hydroxyl of (S)-3-O-geranylgeranylglyceryl phosphate (GGGP). This reaction is the second ether-bond-formation step in the biosynthesis of archaeal membrane lipids. This chain is Digeranylgeranylglyceryl phosphate synthase, found in Methanocaldococcus jannaschii (strain ATCC 43067 / DSM 2661 / JAL-1 / JCM 10045 / NBRC 100440) (Methanococcus jannaschii).